The sequence spans 210 residues: Cell division protein SepF (210 aa).

The interval 13–78 is disordered; that stretch reads GFGEPTGYDY…VTSTAMNPPM (66 aa). Residues 22-31 are compositionally biased toward acidic residues; it reads YDYDEMEGDD. A compositionally biased stretch (basic and acidic residues) spans 47 to 60; it reads RSEEPHPRPSEPEM. A compositionally biased stretch (polar residues) spans 64–78; it reads VNTSAVTSTAMNPPM.

It belongs to the SepF family. Homodimer. Interacts with FtsZ.

The protein localises to the cytoplasm. Functionally, cell division protein that is part of the divisome complex and is recruited early to the Z-ring. Probably stimulates Z-ring formation, perhaps through the cross-linking of FtsZ protofilaments. Its function overlaps with FtsA. The protein is Cell division protein SepF of Cyanothece sp. (strain PCC 7425 / ATCC 29141).